Consider the following 517-residue polypeptide: Beta-glucosidase 17 (517 aa).

The signal sequence occupies residues 1 to 23 (MAIKSIFIIIIISIITSISELYA). Residues Gln54, His158, and 203–204 (NE) contribute to the a beta-D-glucoside site. The active-site Proton donor is the Glu204. A disulfide bridge connects residues Cys223 and Cys230. Residue Asn229 is glycosylated (N-linked (GlcNAc...) asparagine). Residue Tyr346 coordinates a beta-D-glucoside. Residues Asn361 and Asn371 are each glycosylated (N-linked (GlcNAc...) asparagine). Residues Glu417, Trp466, 473–474 (EW), and Tyr482 each bind a beta-D-glucoside. Catalysis depends on Glu417, which acts as the Nucleophile. Asn510 carries N-linked (GlcNAc...) asparagine glycosylation.

This sequence belongs to the glycosyl hydrolase 1 family.

It carries out the reaction Hydrolysis of terminal, non-reducing beta-D-glucosyl residues with release of beta-D-glucose.. The sequence is that of Beta-glucosidase 17 from Arabidopsis thaliana (Mouse-ear cress).